The following is a 442-amino-acid chain: 23S rRNA (uracil(1939)-C(5))-methyltransferase RlmD (442 aa).

In terms of domain architecture, TRAM spans 10–75; that stretch reads AKQTAKNCCK…RQYGRAKANK (66 aa). Residues C88, C94, C97, and C173 each coordinate [4Fe-4S] cluster. Residues Q276, F305, N310, E326, N353, and D374 each contribute to the S-adenosyl-L-methionine site. The active-site Nucleophile is the C400.

This sequence belongs to the class I-like SAM-binding methyltransferase superfamily. RNA M5U methyltransferase family. RlmD subfamily.

The catalysed reaction is uridine(1939) in 23S rRNA + S-adenosyl-L-methionine = 5-methyluridine(1939) in 23S rRNA + S-adenosyl-L-homocysteine + H(+). Functionally, catalyzes the formation of 5-methyl-uridine at position 1939 (m5U1939) in 23S rRNA. The sequence is that of 23S rRNA (uracil(1939)-C(5))-methyltransferase RlmD from Haemophilus ducreyi (strain 35000HP / ATCC 700724).